The following is a 361-amino-acid chain: Tetraacyldisaccharide 4'-kinase (361 aa).

Residue 68–75 participates in ATP binding; that stretch reads TVGGTGKT.

This sequence belongs to the LpxK family.

It catalyses the reaction a lipid A disaccharide + ATP = a lipid IVA + ADP + H(+). The protein operates within glycolipid biosynthesis; lipid IV(A) biosynthesis; lipid IV(A) from (3R)-3-hydroxytetradecanoyl-[acyl-carrier-protein] and UDP-N-acetyl-alpha-D-glucosamine: step 6/6. Functionally, transfers the gamma-phosphate of ATP to the 4'-position of a tetraacyldisaccharide 1-phosphate intermediate (termed DS-1-P) to form tetraacyldisaccharide 1,4'-bis-phosphate (lipid IVA). The chain is Tetraacyldisaccharide 4'-kinase from Pelobacter propionicus (strain DSM 2379 / NBRC 103807 / OttBd1).